The sequence spans 205 residues: Small ribosomal subunit protein mS26 (205 aa).

Residues 1 to 26 (MLRALSTLGARPLGRPPAQFLLLARG) constitute a mitochondrion transit peptide.

It belongs to the mitochondrion-specific ribosomal protein mS26 family. Component of the mitochondrial ribosome small subunit (28S) which comprises a 12S rRNA and about 30 distinct proteins.

Its subcellular location is the mitochondrion. This chain is Small ribosomal subunit protein mS26 (MRPS26), found in Bos taurus (Bovine).